Consider the following 235-residue polypeptide: Leucyl/phenylalanyl-tRNA--protein transferase (235 aa).

Belongs to the L/F-transferase family.

It is found in the cytoplasm. The catalysed reaction is N-terminal L-lysyl-[protein] + L-leucyl-tRNA(Leu) = N-terminal L-leucyl-L-lysyl-[protein] + tRNA(Leu) + H(+). It carries out the reaction N-terminal L-arginyl-[protein] + L-leucyl-tRNA(Leu) = N-terminal L-leucyl-L-arginyl-[protein] + tRNA(Leu) + H(+). It catalyses the reaction L-phenylalanyl-tRNA(Phe) + an N-terminal L-alpha-aminoacyl-[protein] = an N-terminal L-phenylalanyl-L-alpha-aminoacyl-[protein] + tRNA(Phe). Functionally, functions in the N-end rule pathway of protein degradation where it conjugates Leu, Phe and, less efficiently, Met from aminoacyl-tRNAs to the N-termini of proteins containing an N-terminal arginine or lysine. In Aeromonas hydrophila subsp. hydrophila (strain ATCC 7966 / DSM 30187 / BCRC 13018 / CCUG 14551 / JCM 1027 / KCTC 2358 / NCIMB 9240 / NCTC 8049), this protein is Leucyl/phenylalanyl-tRNA--protein transferase.